Consider the following 297-residue polypeptide: Acetylglutamate kinase (297 aa).

Residues 72-73 (GG), R94, and N187 contribute to the substrate site.

Belongs to the acetylglutamate kinase family. ArgB subfamily.

It localises to the cytoplasm. It carries out the reaction N-acetyl-L-glutamate + ATP = N-acetyl-L-glutamyl 5-phosphate + ADP. The protein operates within amino-acid biosynthesis; L-arginine biosynthesis; N(2)-acetyl-L-ornithine from L-glutamate: step 2/4. In terms of biological role, catalyzes the ATP-dependent phosphorylation of N-acetyl-L-glutamate. This is Acetylglutamate kinase from Synechocystis sp. (strain ATCC 27184 / PCC 6803 / Kazusa).